A 465-amino-acid chain; its full sequence is Cysteine--tRNA ligase (465 aa).

Cys-29 is a Zn(2+) binding site. The 'HIGH' region signature appears at 31 to 41 (PTVYNYIHIGN). Positions 209, 234, and 238 each coordinate Zn(2+). A 'KMSKS' region motif is present at residues 266 to 270 (KMSKS). Residue Lys-269 coordinates ATP. The residue at position 270 (Ser-270) is a Phosphoserine.

It belongs to the class-I aminoacyl-tRNA synthetase family. Monomer. Zn(2+) is required as a cofactor.

It is found in the cytoplasm. The enzyme catalyses tRNA(Cys) + L-cysteine + ATP = L-cysteinyl-tRNA(Cys) + AMP + diphosphate. The chain is Cysteine--tRNA ligase from Anoxybacillus flavithermus (strain DSM 21510 / WK1).